The chain runs to 215 residues: Large ribosomal subunit protein uL3 (215 aa).

At Gln-153 the chain carries N5-methylglutamine.

Belongs to the universal ribosomal protein uL3 family. As to quaternary structure, part of the 50S ribosomal subunit. Forms a cluster with proteins L14 and L19. Methylated by PrmB.

Its function is as follows. One of the primary rRNA binding proteins, it binds directly near the 3'-end of the 23S rRNA, where it nucleates assembly of the 50S subunit. The sequence is that of Large ribosomal subunit protein uL3 from Nitrosococcus oceani (strain ATCC 19707 / BCRC 17464 / JCM 30415 / NCIMB 11848 / C-107).